The primary structure comprises 226 residues: UPF0758 protein Daci_1904 (226 aa).

The 123-residue stretch at 104 to 226 (ALASPEAVAR…SLSMAGQGML (123 aa)) folds into the MPN domain. Zn(2+)-binding residues include histidine 175, histidine 177, and aspartate 188. The short motif at 175 to 188 (HNHPSGQVQASAAD) is the JAMM motif element.

It belongs to the UPF0758 family.

The polypeptide is UPF0758 protein Daci_1904 (Delftia acidovorans (strain DSM 14801 / SPH-1)).